The chain runs to 185 residues: Monooxygenase hypC (185 aa).

3 consecutive transmembrane segments (helical) span residues 35–55 (TGTF…PVIL), 75–95 (GHIQ…YAAY), and 106–126 (PFAV…VFMA). N129 carries an N-linked (GlcNAc...) asparagine glycan. Residues 165 to 185 (ALFPLSGAVLGLLSTCKIVSF) form a helical membrane-spanning segment.

This sequence belongs to the anthrone oxygenase family.

The protein resides in the membrane. Its pathway is mycotoxin biosynthesis. Functionally, monooxygenase; part of the fragmented gene cluster that mediates the biosynthesis of dothistromin (DOTH), a polyketide toxin very similar in structure to the aflatoxin precursor, versicolorin B. The first step of the pathway is the conversion of acetate to norsolorinic acid (NOR) and requires the fatty acid synthase subunits hexA and hexB, as well as the polyketide synthase pksA. PksA combines a hexanoyl starter unit and 7 malonyl-CoA extender units to synthesize the precursor NOR. The hexanoyl starter unit is provided to the acyl-carrier protein (ACP) domain by the fungal fatty acid synthase hexA/hexB. The second step is the conversion of NOR to averantin (AVN) and requires the norsolorinic acid ketoreductase nor1, which catalyzes the dehydration of norsolorinic acid to form (1'S)-averantin. The cytochrome P450 monooxygenase avnA then catalyzes the hydroxylation of AVN to 5'hydroxyaverantin (HAVN). The next step is performed by adhA that transforms HAVN to averufin (AVF). Averufin might then be converted to hydroxyversicolorone by cypX and avfA. Hydroxyversicolorone is further converted versiconal hemiacetal acetate (VHA) by moxY. VHA is then the substrate for the versiconal hemiacetal acetate esterase est1 to yield versiconal (VAL). Versicolorin B synthase vbsA then converts VAL to versicolorin B (VERB) by closing the bisfuran ring. Then, the activity of the versicolorin B desaturase verB leads to versicolorin A (VERA). DotB, a predicted chloroperoxidase, may perform epoxidation of the A-ring of VERA. Alternatively, a cytochrome P450, such as cypX or avnA could catalyze this step. It is also possible that another, uncharacterized, cytochrome P450 enzyme is responsible for this step. Opening of the epoxide could potentially be achieved by the epoxide hydrolase epoA. However, epoA seems not to be required for DOTH biosynthesis, but other epoxide hydrolases may have the ability to complement this hydrolysis. Alternatively, opening of the epoxide ring could be achieved non-enzymatically. The next step is the deoxygenation of ring A to yield the 5,8-dihydroxyanthraquinone which is most likely catalyzed by the NADPH dehydrogenase encoded by ver1. The last stages of DOTH biosynthesis are proposed to involve hydroxylation of the bisfuran. OrdB and norB might have oxidative roles here. An alternative possibility is that cytochrome P450 monoogenases such as avnA and cypX might perform these steps in addition to previously proposed steps. The sequence is that of Monooxygenase hypC from Dothistroma septosporum (strain NZE10 / CBS 128990) (Red band needle blight fungus).